Consider the following 43-residue polypeptide: Protein PsbN (43 aa).

The helical transmembrane segment at 5-27 (TVFSIFISCLLLSLTGYSLYTAF) threads the bilayer.

It belongs to the PsbN family.

It localises to the plastid. The protein localises to the chloroplast thylakoid membrane. Functionally, may play a role in photosystem I and II biogenesis. This Chlorokybus atmophyticus (Soil alga) protein is Protein PsbN.